Consider the following 670-residue polypeptide: MTFSVQHAEIHFNQNHIPVSDQFDDVYFSNENGLAETDYVFLQGNQLWERWITHKEANFVIAETGFGTGLNFFAATKLFRKFRQQHENHPLKRLNFISFEKYPLKITALSQAHLACPQFEDLSAHLQRYWPSLILGCHRIHFEETTLDLWFGDVSENLPQLGDYMNERIDAWFLDGFAPSKNPEMWNDDLYNLIFRFTKPNGTFATFTAASAVRKGLESAGFNVTKRKGFGKKRECLSGLKIQSKSTALSTPWYLAQPAKMEKQDFAIIGGGIASLCAAISLVKRGAKVTIYCEDAALALNASGNKQGAFYPQLSDDNVLTVDFYLHAFSYGRQLLDWAIEQNIAFEHEFCGVALCAYNEKSAVKLTKISQLGLPNEIFQMLSAEQLSEKVGLPLNCEGGWIEQGAWLAPRQFVQNAFSFLEKQGVIIKTAQKITALSQEEKGWELKNMQGQKYCHEVVILANGHKITDFVQTEKLPLYPIRGQVSQIPTSENLLKLKSVLCYDGYLTPANQLKTSHCIGASHVRDNVDRHFSEQEQQENQQKLQQNIAQPWTQDVNTSDNLARVGIRCSVRDLAPMVGNVPHFEQQQAGYYNLFNLRRRKQPIQSAVNFQNIFLIAALGSRGLTSAPLLGETLASILYGEPLPISEGILHNLSANRAWVKKWLKGSKVE.

Residues 1-242 (MTFSVQHAEI…KRECLSGLKI (242 aa)) are tRNA (mnm(5)s(2)U34)-methyltransferase. The interval 269-670 (IGGGIASLCA…KKWLKGSKVE (402 aa)) is FAD-dependent cmnm(5)s(2)U34 oxidoreductase.

It in the N-terminal section; belongs to the methyltransferase superfamily. tRNA (mnm(5)s(2)U34)-methyltransferase family. The protein in the C-terminal section; belongs to the DAO family. FAD serves as cofactor.

The protein localises to the cytoplasm. The enzyme catalyses 5-aminomethyl-2-thiouridine(34) in tRNA + S-adenosyl-L-methionine = 5-methylaminomethyl-2-thiouridine(34) in tRNA + S-adenosyl-L-homocysteine + H(+). Its function is as follows. Catalyzes the last two steps in the biosynthesis of 5-methylaminomethyl-2-thiouridine (mnm(5)s(2)U) at the wobble position (U34) in tRNA. Catalyzes the FAD-dependent demodification of cmnm(5)s(2)U34 to nm(5)s(2)U34, followed by the transfer of a methyl group from S-adenosyl-L-methionine to nm(5)s(2)U34, to form mnm(5)s(2)U34. The chain is tRNA 5-methylaminomethyl-2-thiouridine biosynthesis bifunctional protein MnmC from Haemophilus influenzae (strain PittGG).